A 240-amino-acid chain; its full sequence is MNESERKIVEEFQKKTGINFKNEELLFRALCHSSYANEQNQAGRKNVESNEKLEFLGDAVLELFVCEILYKKYPEAEVGDLARVKSAAASEEVLALVSRKMNLGKFLFLGKGEEKTGGRDRDSILADAFEALLAAIYLDQGYEKIKELFEQEFEFYIEKIMKGEMLFDYKTALQEIVQSEHKVPPEYVLVRTEKNDGDRIFVVEVRVDGKTIATGRGRTKKEAEKEAARIAYEKLLKERA.

Residues 9-141 (VEEFQKKTGI…LLAAIYLDQG (133 aa)) enclose the RNase III domain. Residue Glu-54 participates in Mg(2+) binding. Asp-58 is an active-site residue. Positions 127 and 130 each coordinate Mg(2+). Glu-130 is an active-site residue. The 70-residue stretch at 168-237 (DYKTALQEIV…ARIAYEKLLK (70 aa)) folds into the DRBM domain.

It belongs to the ribonuclease III family. Homodimer. The cofactor is Mg(2+).

It localises to the cytoplasm. The catalysed reaction is Endonucleolytic cleavage to 5'-phosphomonoester.. Digests double-stranded RNA. Involved in the processing of primary rRNA transcript to yield the immediate precursors to the large and small rRNAs (23S and 16S). Processes some mRNAs, and tRNAs when they are encoded in the rRNA operon. Processes pre-crRNA and tracrRNA of type II CRISPR loci if present in the organism. In Thermotoga sp. (strain RQ2), this protein is Ribonuclease 3.